A 250-amino-acid polypeptide reads, in one-letter code: Cell division protein ZapD (250 aa).

Belongs to the ZapD family. Interacts with FtsZ.

The protein resides in the cytoplasm. Its function is as follows. Cell division factor that enhances FtsZ-ring assembly. Directly interacts with FtsZ and promotes bundling of FtsZ protofilaments, with a reduction in FtsZ GTPase activity. The protein is Cell division protein ZapD of Serratia proteamaculans (strain 568).